A 415-amino-acid chain; its full sequence is Fructose-like permease IIC component 1 (415 aa).

The Cytoplasmic portion of the chain corresponds to 1–46 (MAIKKRSATVVPGASGAAAAVKNPQASKTSFWGELPQHVMSGISRM). The PTS EIIC type-2 domain occupies 35 to 410 (LPQHVMSGIS…RLMMFRKGKL (376 aa)). The chain crosses the membrane as a helical span at residues 47–67 (VPTLIMGGVILAFSQLIAYSW). Residues 68–101 (LKIPAEIGIMDALNSGKFSGFDLSLLKFAWLSQS) are Periplasmic-facing. A helical membrane pass occupies residues 102 to 122 (FGGVLFGFAIPMFAAFVANSI). The Cytoplasmic segment spans residues 123–126 (GGKL). Residues 127–147 (AFPAGFIGGLMSTQPTQLLNF) traverse the membrane as a helical segment. The Periplasmic segment spans residues 148-157 (DPSTMQWATS). Residues 158-178 (SPVPSTFIGALIISIVAGYLV) form a helical membrane-spanning segment. The Cytoplasmic portion of the chain corresponds to 179-197 (KWMNQKIQLPDFLLAFKTT). A helical transmembrane segment spans residues 198-218 (FLLPILSAIFVMLAMYYVITP). Topologically, residues 219–237 (FGGWINGGIRTVLTAAGEK) are periplasmic. The chain crosses the membrane as a helical span at residues 238-258 (GALMYAMGIAAATAIDLGGPI). Residues 259–276 (NKAAGFVAFSFTTDHVLP) lie on the Cytoplasmic side of the membrane. The chain crosses the membrane as a helical span at residues 277–297 (VTARSIAIVIPPIGLGLATII). At 298-318 (DRRLTGKRLFNAQLYPQGKTA) the chain is on the periplasmic side. The chain crosses the membrane as a helical span at residues 319 to 339 (MFLAFMGISEGAIPFALESPI). Residues 340 to 341 (TA) lie on the Cytoplasmic side of the membrane. A helical membrane pass occupies residues 342–362 (IPSYMVGAIVGSTAAVWLGAV). The Periplasmic segment spans residues 363–378 (QWFPESAIWAWPLVTN). A helical transmembrane segment spans residues 379 to 399 (LGVYMAGIALGAVITALMVVF). Over 400–415 (LRLMMFRKGKLLIDSL) the chain is Cytoplasmic.

The protein resides in the cell inner membrane. In terms of biological role, the phosphoenolpyruvate-dependent sugar phosphotransferase system (PTS), a major carbohydrate active -transport system, catalyzes the phosphorylation of incoming sugar substrates concomitant with their translocation across the cell membrane. This Escherichia coli (strain K12) protein is Fructose-like permease IIC component 1 (fryC).